The chain runs to 140 residues: Nucleoside diphosphate kinase (140 aa).

6 residues coordinate ATP: Lys11, Phe59, Arg87, Thr93, Arg104, and Asn114. His117 (pros-phosphohistidine intermediate) is an active-site residue.

This sequence belongs to the NDK family. Homotetramer. Mg(2+) is required as a cofactor.

The protein resides in the cytoplasm. The enzyme catalyses a 2'-deoxyribonucleoside 5'-diphosphate + ATP = a 2'-deoxyribonucleoside 5'-triphosphate + ADP. It carries out the reaction a ribonucleoside 5'-diphosphate + ATP = a ribonucleoside 5'-triphosphate + ADP. Functionally, major role in the synthesis of nucleoside triphosphates other than ATP. The ATP gamma phosphate is transferred to the NDP beta phosphate via a ping-pong mechanism, using a phosphorylated active-site intermediate. This Erythrobacter litoralis (strain HTCC2594) protein is Nucleoside diphosphate kinase.